The chain runs to 1082 residues: AP-3 complex subunit beta-2 (1082 aa).

Positions 1 to 30 (MSAAPAYSEDKGGSAGPGEPEYGHDPASGG) are disordered. S272 and S282 each carry phosphoserine. Basic and acidic residues predominate over residues 666–677 (NREKRKEKEKPF). The disordered stretch occupies residues 666–801 (NREKRKEKEK…KTPPGSKSAP (136 aa)). Over residues 691-700 (ADSEPESESE) the composition is skewed to acidic residues. Over residues 704–715 (KSSSGSGSGESS) the composition is skewed to low complexity. Acidic residues-rich tracts occupy residues 716–726 (SESDNEEEDEE) and 775–784 (VTSESEEEQV).

Belongs to the adaptor complexes large subunit family. In terms of assembly, adaptor protein complex 3 (AP-3) is a heterotetramer composed of two large adaptins (delta-type subunit AP3D1 and beta-type subunit AP3B1 or AP3B2), a medium adaptin (mu-type subunit AP3M1 or AP3M2) and a small adaptin (sigma-type subunit APS1 or AP3S2). AP-3 associates with the BLOC-1 complex.

Its subcellular location is the cytoplasmic vesicle. The protein resides in the clathrin-coated vesicle membrane. The protein localises to the golgi apparatus. Its function is as follows. Subunit of non-clathrin- and clathrin-associated adaptor protein complex 3 (AP-3) that plays a role in protein sorting in the late-Golgi/trans-Golgi network (TGN) and/or endosomes. The AP complexes mediate both the recruitment of clathrin to membranes and the recognition of sorting signals within the cytosolic tails of transmembrane cargo molecules. AP-3 appears to be involved in the sorting of a subset of transmembrane proteins targeted to lysosomes and lysosome-related organelles. In concert with the BLOC-1 complex, AP-3 is required to target cargos into vesicles assembled at cell bodies for delivery into neurites and nerve terminals. The sequence is that of AP-3 complex subunit beta-2 (Ap3b2) from Mus musculus (Mouse).